A 164-amino-acid polypeptide reads, in one-letter code: General odorant-binding protein 1 (164 aa).

The first 18 residues, 1-18 (MWKLVVVLTVNLLQGALT), serve as a signal peptide directing secretion. Cystine bridges form between Cys-37–Cys-72, Cys-68–Cys-126, and Cys-115–Cys-135.

It belongs to the PBP/GOBP family. As to quaternary structure, homodimer. As to expression, antenna.

Present in the aqueous fluid surrounding olfactory sensory dendrites and are thought to aid in the capture and transport of hydrophobic odorants into and through this fluid. The chain is General odorant-binding protein 1 from Bombyx mori (Silk moth).